The primary structure comprises 336 residues: Ribosomal RNA large subunit methyltransferase F (336 aa).

Residues 1–24 (MPRPTSPHPDAERKSASPLHPRNR) are disordered.

This sequence belongs to the methyltransferase superfamily. METTL16/RlmF family.

It localises to the cytoplasm. The catalysed reaction is adenosine(1618) in 23S rRNA + S-adenosyl-L-methionine = N(6)-methyladenosine(1618) in 23S rRNA + S-adenosyl-L-homocysteine + H(+). Its function is as follows. Specifically methylates the adenine in position 1618 of 23S rRNA. The polypeptide is Ribosomal RNA large subunit methyltransferase F (Pseudomonas aeruginosa (strain LESB58)).